A 161-amino-acid polypeptide reads, in one-letter code: Phosphopantetheine adenylyltransferase (161 aa).

Residue threonine 10 coordinates substrate. Residues 10-11 and histidine 18 contribute to the ATP site; that span reads TF. Residues lysine 42, methionine 74, and arginine 88 each coordinate substrate. ATP is bound by residues 89–91, glutamate 99, and 124–130; these read GLR and WSFISSS.

It belongs to the bacterial CoaD family. As to quaternary structure, homohexamer. Mg(2+) is required as a cofactor.

It is found in the cytoplasm. The enzyme catalyses (R)-4'-phosphopantetheine + ATP + H(+) = 3'-dephospho-CoA + diphosphate. The protein operates within cofactor biosynthesis; coenzyme A biosynthesis; CoA from (R)-pantothenate: step 4/5. Its function is as follows. Reversibly transfers an adenylyl group from ATP to 4'-phosphopantetheine, yielding dephospho-CoA (dPCoA) and pyrophosphate. This Serratia proteamaculans (strain 568) protein is Phosphopantetheine adenylyltransferase.